Here is a 469-residue protein sequence, read N- to C-terminus: Calcium-binding mitochondrial carrier protein SCaMC-2-A (469 aa).

Residues 1–189 (MLCLCLYVPV…EHLTGMWWRH (189 aa)) are Mitochondrial intermembrane-facing. EF-hand domains lie at 47–80 (TYRR…QDHE), 78–113 (DHEK…LGVH), and 114–149 (ISLK…QPAE). Asp64, Gln66, and Glu71 together coordinate Ca(2+). 3 Solcar repeats span residues 184–270 (GMWW…IKRV), 278–363 (LGIS…LKNT), and 375–463 (PGVF…IKST). The chain crosses the membrane as a helical span at residues 190–207 (LVSGGGAGAVSRTCTAPL). At 208–244 (DRLKVLMQVHGCQGKSMCLMSGLTQMIKEGGVRSLWR) the chain is on the mitochondrial matrix side. Residues 245–264 (GNGINVIKIAPETALKFMAY) traverse the membrane as a helical segment. Topologically, residues 265 to 287 (EQIKRVMGSSQETLGISERFVAG) are mitochondrial intermembrane. A helical membrane pass occupies residues 288–301 (SLAGVIAQSTIYPM). The Mitochondrial matrix segment spans residues 302 to 337 (EVLKTRLALRKTGQYKGISDCAKHILKTEGMSAFYK). Residues 338-357 (GYVPNMLGIIPYAGIDLAVY) traverse the membrane as a helical segment. The Mitochondrial intermembrane segment spans residues 358–380 (ETLKNTWLQRYGTENADPGVFVL). Residues 381–398 (LACGTVSSTCGQLASYPL) form a helical membrane-spanning segment. The Mitochondrial matrix portion of the chain corresponds to 399 to 437 (ALIRTRMQAQASVEGSSQVSMTGLFKQIMKTEGPTGLYR). The chain crosses the membrane as a helical span at residues 438–457 (GLTPNFLKVIPAVSISYVVY). Over 458 to 469 (EHIKSTLGVRSR) the chain is Mitochondrial intermembrane.

The protein belongs to the mitochondrial carrier (TC 2.A.29) family.

The protein resides in the mitochondrion inner membrane. Calcium-dependent mitochondrial solute carrier. The sequence is that of Calcium-binding mitochondrial carrier protein SCaMC-2-A (slc25a25a) from Danio rerio (Zebrafish).